The following is a 36-amino-acid chain: Histone H1-like protein EM5 (36 aa).

The 36-residue stretch at 1 to 36 (MITAAVGALKERGGSSRQAILKYIQANFKVQANPAA) folds into the H15 domain.

The protein belongs to the histone H1/H5 family. In terms of tissue distribution, sperm.

The protein resides in the nucleus. The protein localises to the chromosome. The polypeptide is Histone H1-like protein EM5 (Ensis minor (Razor shell)).